Consider the following 279-residue polypeptide: Putative Delta(7)-sterol-C5(6)-desaturase 2 (279 aa).

2 consecutive transmembrane segments (helical) span residues 48 to 68 and 127 to 147; these read LAGNILYFISGFLWCFYIYYL and FLCFLYIALYLVLVEFMIYWV. The 130-residue stretch at 134–263 folds into the Fatty acid hydroxylase domain; it reads ALYLVLVEFM…TIWMDWMFGS (130 aa). The Histidine box-1 motif lies at 148–152; that stretch reads HKELH. A Histidine box-2 motif is present at residues 162–166; sequence HATHH. A helical transmembrane segment spans residues 194-214; that stretch reads HVIALFIVPIHLITHLSLLFL. Residues 239-243 carry the Histidine box-3 motif; it reads HTIHH.

The protein belongs to the sterol desaturase family. Fe cation is required as a cofactor.

Its subcellular location is the endoplasmic reticulum membrane. It catalyses the reaction a Delta(7)-sterol + 2 Fe(II)-[cytochrome b5] + O2 + 2 H(+) = a Delta(5),Delta(7)-sterol + 2 Fe(III)-[cytochrome b5] + 2 H2O. In Arabidopsis thaliana (Mouse-ear cress), this protein is Putative Delta(7)-sterol-C5(6)-desaturase 2 (HDF7).